The sequence spans 230 residues: Orotidine 5'-phosphate decarboxylase (230 aa).

Substrate is bound by residues D10, K31, 58–67 (DLKLHDIPNT), T117, R179, Q188, G208, and R209. K60 functions as the Proton donor in the catalytic mechanism.

Belongs to the OMP decarboxylase family. Type 1 subfamily. As to quaternary structure, homodimer.

It catalyses the reaction orotidine 5'-phosphate + H(+) = UMP + CO2. Its pathway is pyrimidine metabolism; UMP biosynthesis via de novo pathway; UMP from orotate: step 2/2. Catalyzes the decarboxylation of orotidine 5'-monophosphate (OMP) to uridine 5'-monophosphate (UMP). The chain is Orotidine 5'-phosphate decarboxylase from Staphylococcus haemolyticus (strain JCSC1435).